The primary structure comprises 479 residues: MSQPLSLTAEQPVHFIGVGGIGMSAIAGILAERSYNVTGSDPKQSAQSQLLRQQGARVFQQQNAATIDAICSGVDRAPLVVVSSAIPETNPELEAARGAGLRVVHRSELLAWLINAQHSIAVAGSHGKTTTSSLIASLLHSAGLDPTAIIGGVVPAFGSNARNGAGEWLVAEADESDGSLVRFHPQLGLITNLELDHTDHYPNLDALVATMRRFSGNCSSVLANRDCPVLSAELSADHWWSLQENSSAHFRAVPLSLDGAGCRADYLEDGRRLGELALPMAGIHNLSNALAAVAACRLAGASFADLQAALTELVPPGRRFDLRGEWQGRLIVDDYAHHPSEVDATLTMAQLMVSSGKSTLPWVPKRVVAVFQPHRYSRTAQFMERFAEALGCADEVLVAPLYSAGESAIEGVSSATLAEKVQQAGHSARALADMDSLVDAVQQCSSAGDLVLVMGAGDVNQLWSRLQSSADQQGLATAA.

124–130 (GSHGKTT) contributes to the ATP binding site.

It belongs to the MurCDEF family.

It localises to the cytoplasm. The catalysed reaction is UDP-N-acetyl-alpha-D-muramate + L-alanine + ATP = UDP-N-acetyl-alpha-D-muramoyl-L-alanine + ADP + phosphate + H(+). It participates in cell wall biogenesis; peptidoglycan biosynthesis. Functionally, cell wall formation. The chain is UDP-N-acetylmuramate--L-alanine ligase from Synechococcus sp. (strain RCC307).